Consider the following 242-residue polypeptide: Carboxy-S-adenosyl-L-methionine synthase (242 aa).

S-adenosyl-L-methionine contacts are provided by residues Y39, 64–66 (GCS), 89–90 (DN), 117–118 (DI), N132, and R199.

Belongs to the class I-like SAM-binding methyltransferase superfamily. Cx-SAM synthase family. As to quaternary structure, homodimer.

It carries out the reaction prephenate + S-adenosyl-L-methionine = carboxy-S-adenosyl-L-methionine + 3-phenylpyruvate + H2O. In terms of biological role, catalyzes the conversion of S-adenosyl-L-methionine (SAM) to carboxy-S-adenosyl-L-methionine (Cx-SAM). This Psychromonas ingrahamii (strain DSM 17664 / CCUG 51855 / 37) protein is Carboxy-S-adenosyl-L-methionine synthase.